A 324-amino-acid polypeptide reads, in one-letter code: NADH-ubiquinone oxidoreductase chain 1 (324 aa).

Helical transmembrane passes span 9-29, 75-95, 106-126, 146-166, 178-198, 212-232, 259-279, and 299-319; these read LINP…LTLV, ILFL…WAPM, LGIL…LGSG, ISYE…SGGY, TWLL…TLAE, ELVS…FFLA, ELMT…FLWM, and FLPI…ALAG.

It belongs to the complex I subunit 1 family. As to quaternary structure, core subunit of respiratory chain NADH dehydrogenase (Complex I) which is composed of 45 different subunits.

It localises to the mitochondrion inner membrane. It catalyses the reaction a ubiquinone + NADH + 5 H(+)(in) = a ubiquinol + NAD(+) + 4 H(+)(out). Its function is as follows. Core subunit of the mitochondrial membrane respiratory chain NADH dehydrogenase (Complex I) which catalyzes electron transfer from NADH through the respiratory chain, using ubiquinone as an electron acceptor. Essential for the catalytic activity and assembly of complex I. This chain is NADH-ubiquinone oxidoreductase chain 1 (mt-nd1), found in Danio rerio (Zebrafish).